Reading from the N-terminus, the 321-residue chain is DNA-directed RNA polymerase subunit alpha (321 aa).

The alpha N-terminal domain (alpha-NTD) stretch occupies residues 1–235; it reads MAYQIECLET…DLFSPLKEVP (235 aa). The alpha C-terminal domain (alpha-CTD) stretch occupies residues 252 to 321; the sequence is QIPIEQLNLS…TLPPQKAARN (70 aa).

It belongs to the RNA polymerase alpha chain family. Homodimer. In cyanobacteria the RNAP catalytic core is composed of 2 alpha, 1 beta, 1 beta', 1 gamma and 1 omega subunit. When a sigma factor is associated with the core the holoenzyme is formed, which can initiate transcription.

The catalysed reaction is RNA(n) + a ribonucleoside 5'-triphosphate = RNA(n+1) + diphosphate. DNA-dependent RNA polymerase catalyzes the transcription of DNA into RNA using the four ribonucleoside triphosphates as substrates. The protein is DNA-directed RNA polymerase subunit alpha of Thermosynechococcus vestitus (strain NIES-2133 / IAM M-273 / BP-1).